A 132-amino-acid polypeptide reads, in one-letter code: Small ribosomal subunit protein uS8 (132 aa).

The protein belongs to the universal ribosomal protein uS8 family. Part of the 30S ribosomal subunit. Contacts proteins S5 and S12.

Its function is as follows. One of the primary rRNA binding proteins, it binds directly to 16S rRNA central domain where it helps coordinate assembly of the platform of the 30S subunit. The chain is Small ribosomal subunit protein uS8 from Rickettsia akari (strain Hartford).